Consider the following 217-residue polypeptide: Probable transaldolase (217 aa).

Lys83 functions as the Schiff-base intermediate with substrate in the catalytic mechanism.

It belongs to the transaldolase family. Type 3B subfamily.

The protein resides in the cytoplasm. The catalysed reaction is D-sedoheptulose 7-phosphate + D-glyceraldehyde 3-phosphate = D-erythrose 4-phosphate + beta-D-fructose 6-phosphate. The protein operates within carbohydrate degradation; pentose phosphate pathway; D-glyceraldehyde 3-phosphate and beta-D-fructose 6-phosphate from D-ribose 5-phosphate and D-xylulose 5-phosphate (non-oxidative stage): step 2/3. Functionally, transaldolase is important for the balance of metabolites in the pentose-phosphate pathway. This chain is Probable transaldolase, found in Paracoccus denitrificans (strain Pd 1222).